The primary structure comprises 442 residues: Enolase 1 (442 aa).

The interval Lys73–His140 is binds human collagen. (2R)-2-phosphoglycerate is bound at residue Gln163. The active-site Proton donor is the Glu205. Residues Asp242, Glu290, and Asp317 each contribute to the Mg(2+) site. Lys342, Arg371, Ser372, and Lys393 together coordinate (2R)-2-phosphoglycerate. Residue Lys342 is the Proton acceptor of the active site.

Belongs to the enolase family. Mg(2+) serves as cofactor.

Its subcellular location is the cytoplasm. The protein resides in the secreted. The protein localises to the cell surface. It carries out the reaction (2R)-2-phosphoglycerate = phosphoenolpyruvate + H2O. It functions in the pathway carbohydrate degradation; glycolysis; pyruvate from D-glyceraldehyde 3-phosphate: step 4/5. In terms of biological role, catalyzes the reversible conversion of 2-phosphoglycerate (2-PG) into phosphoenolpyruvate (PEP). It is essential for the degradation of carbohydrates via glycolysis. Functionally, 'Moonlights' as a collagen receptor. Binds host (human) collagen, which may contribute to pathogenicity. This Lactiplantibacillus plantarum (strain ATCC BAA-793 / NCIMB 8826 / WCFS1) (Lactobacillus plantarum) protein is Enolase 1.